A 445-amino-acid chain; its full sequence is MKKAFVKSYGCQMNAYDAARMADVLGAEGYTATDTVEDADVVVLNTCHIREKAAEKVYSELGRLRVLKGERKAQGLDTRIVVAGCVAQAEGAEIQARQPAVDVVVGPQSYHRLPDLLARSRERRVVDTEFPVEDKFDHLPRRRTLGASAFLTVQEGCDKFCAFCVVPYTRGAEVSRSVAAVLAEAEKLADGGVREITLIGQNVNAYHGDGPDGAPAGLADLVRAVAKIPGIARIRYTTSHPNDFDDALIRAHAEVPALMPYLHLPVQSGSDRILAAMNRKHTGDAYRRLIDRIRAARPDIALSSDFIVGFPGETDADFAETLRLVRDVGFESAFSFKYSTRPGTPAADRTDQVPEAVMAARLAELQALLDSQRHAYQRAAAGRVFDVLVEKRGRHPGQVAGKTPHLLAVQFDAAPHHIGQVVPVRITEAGSNSLFGELVSEAAAA.

An MTTase N-terminal domain is found at 2-122 (KKAFVKSYGC…LPDLLARSRE (121 aa)). [4Fe-4S] cluster-binding residues include Cys-11, Cys-47, Cys-85, Cys-157, Cys-161, and Cys-164. Positions 143–378 (RTLGASAFLT…LDSQRHAYQR (236 aa)) constitute a Radical SAM core domain. One can recognise a TRAM domain in the interval 378-440 (RAAAGRVFDV…SNSLFGELVS (63 aa)).

The protein belongs to the methylthiotransferase family. MiaB subfamily. In terms of assembly, monomer. [4Fe-4S] cluster is required as a cofactor.

Its subcellular location is the cytoplasm. The catalysed reaction is N(6)-dimethylallyladenosine(37) in tRNA + (sulfur carrier)-SH + AH2 + 2 S-adenosyl-L-methionine = 2-methylsulfanyl-N(6)-dimethylallyladenosine(37) in tRNA + (sulfur carrier)-H + 5'-deoxyadenosine + L-methionine + A + S-adenosyl-L-homocysteine + 2 H(+). In terms of biological role, catalyzes the methylthiolation of N6-(dimethylallyl)adenosine (i(6)A), leading to the formation of 2-methylthio-N6-(dimethylallyl)adenosine (ms(2)i(6)A) at position 37 in tRNAs that read codons beginning with uridine. The sequence is that of tRNA-2-methylthio-N(6)-dimethylallyladenosine synthase from Methylobacterium radiotolerans (strain ATCC 27329 / DSM 1819 / JCM 2831 / NBRC 15690 / NCIMB 10815 / 0-1).